The primary structure comprises 460 residues: Cysteine--tRNA ligase (460 aa).

Cys-29 lines the Zn(2+) pocket. The short motif at 31–41 is the 'HIGH' region element; the sequence is MTIYDLCHIGH. The Zn(2+) site is built by Cys-213, His-238, and Glu-242. Positions 270–274 match the 'KMSKS' region motif; the sequence is KMSKS. Residue Lys-273 coordinates ATP.

This sequence belongs to the class-I aminoacyl-tRNA synthetase family. As to quaternary structure, monomer. Requires Zn(2+) as cofactor.

It is found in the cytoplasm. The enzyme catalyses tRNA(Cys) + L-cysteine + ATP = L-cysteinyl-tRNA(Cys) + AMP + diphosphate. In Verminephrobacter eiseniae (strain EF01-2), this protein is Cysteine--tRNA ligase.